The primary structure comprises 563 residues: DEAD-box ATP-dependent RNA helicase 25 (563 aa).

A disordered region spans residues 21-57 (KKLTSDEDGSGKLVKDNNKSLKRGREGKSDVDEPLIK). Residues 23-56 (LTSDEDGSGKLVKDNNKSLKRGREGKSDVDEPLI) show a composition bias toward basic and acidic residues. The residue at position 25 (serine 25) is a Phosphoserine. The Q motif motif lies at 80 to 108 (TRFDQFPLSPLTLKGIEDAGFKTMTVVQE). Residues 111–294 (LPLILQGKDI…HVALKRDHEF (184 aa)) form the Helicase ATP-binding domain. 124 to 131 (AKTGTGKT) lines the ATP pocket. Residues 242 to 245 (DEAD) carry the DEAD box motif. Residues 328-479 (LLKKHITDNV…AVKKVQKGLI (152 aa)) form the Helicase C-terminal domain.

This sequence belongs to the DEAD box helicase family.

The enzyme catalyses ATP + H2O = ADP + phosphate + H(+). This chain is DEAD-box ATP-dependent RNA helicase 25 (RH25), found in Arabidopsis thaliana (Mouse-ear cress).